The primary structure comprises 1836 residues: InaD-like protein (1836 aa).

The 65-residue stretch at 1-65 folds into the L27 domain; it reads MPENPAAEKM…SIKQLKGQLS (65 aa). 3 consecutive PDZ domains span residues 134–221, 248–328, and 365–453; these read YIDI…AREV, DVEL…ARDP, and NVEL…VRRK. Phosphoserine is present on residues S455, S459, and S482. Residues 456–466 show a composition bias toward polar residues; the sequence is LSASPFEQPSS. Residues 456–492 form a disordered region; it reads LSASPFEQPSSREAVAEPPEVPELTGSLKPETNSRME. The PDZ 4 domain occupies 555 to 641; sequence DEELQKYSKL…PFTLVCCRRL (87 aa). Phosphoserine is present on S647. PDZ domains are found at residues 687-773 and 1074-1166; these read TVEL…ICKP and PRIV…VVQS. The span at 1173–1191 shows a compositional bias: polar residues; it reads VIPSVNNKGKTPPQNQDQN. Residues 1173-1232 form a disordered region; sequence VIPSVNNKGKTPPQNQDQNTQEKKAKRHGTAPPPMKLPPPYRAPSADTEESEEDSALTDK. Residues 1203–1214 are compositionally biased toward pro residues; sequence APPPMKLPPPYR. At S1217 the chain carries Phosphoserine. Residues 1219-1228 are compositionally biased toward acidic residues; that stretch reads DTEESEEDSA. The region spanning 1245 to 1328 is the PDZ 7 domain; sequence LHIIELEKDK…PTRVKLVFIR (84 aa). Positions 1341–1448 are disordered; sequence FPVPSHSPSP…ADVTGSGNFQ (108 aa). The segment covering 1372-1383 has biased composition (basic and acidic residues); that stretch reads PLPERESSKPED. Polar residues-rich tracts occupy residues 1415–1426 and 1434–1448; these read YSAQVSSSSQEI and CQSTHADVTGSGNFQ. 2 consecutive PDZ domains span residues 1472–1555 and 1568–1650; these read EMII…VIYR and VFLV…EIGR. At T1545 the chain carries Phosphothreonine. Residues 1657–1678 are disordered; sequence ASSRKTSQNSQGDQHSAHSSCR. Residues 1709–1795 form the PDZ 10 domain; it reads PRTVEIIREL…FGRIILQVVA (87 aa). The interval 1813-1836 is disordered; it reads SQLGSPTADRHPQDPEELLQRTAD.

In terms of assembly, forms a ternary complex with PALS1 and CRB1. Component of a complex whose core is composed of ARHGAP17, AMOT, PALS1, INADL/PATJ and PARD3/PAR3. Forms a heterotrimeric complex composed of MMP5, LIN7B and PATJ; the N-terminal L27 domain of PALS1 interacts with the L27 domain of PATJ and the C-terminal L27 domain of PALS1 interacts with the L27 domain of LIN7B. Component of a complex composed of CRB3, PALS1 and PATJ. As part of the Crumbs complex; interacts with WWP1, the interaction is enhanced by AMOTL2 and facilitates WWP1 localization to the plasma membrane. The Crumbs complex promotes monoubiquitination of AMOTL2 by WWP1, which activates the Hippo signaling pathway. Interacts (via N-terminus) with PALS1/PALS (via PDZ domain). Interacts with TJP3/ZO-3 and CLDN1/claudin-1. Interacts with ASIC3, KCNJ10, KCNJ15, GRIN2A, GRIN2B, GRIN2C, GRIN2D, NLGN2, and HTR2A. Interacts with MPP7. Directly interacts with HTR4. Interacts (via PDZ domain 8) with WWC1 (via the ADDV motif). Interacts with SLC6A4. Interacts (via C-terminus) with ARHGEF18. Interacts with NPHP1. Interacts with PARD3/PAR3. Interacts (via PDZ1-6 domains) with TJP1/ZO1; the interaction is required for attachment and extension of TJP1/ZO1 condensates along the apical cell interface. As to expression, abundantly expressed in germ cells, also expressed in testes and seminiferous tubules, with faint expression in Sertoli cells (at protein level).

It is found in the cell junction. Its subcellular location is the tight junction. It localises to the apical cell membrane. The protein resides in the cytoplasm. The protein localises to the perinuclear region. In terms of biological role, scaffolding protein that facilitates the localization of proteins to the cell membrane. Required for the correct formation of tight junctions and epithelial apico-basal polarity. Acts (via its L27 domain) as an apical connector and elongation factor for multistranded TJP1/ZO1 condensates that form a tight junction belt, thereby required for the formation of the tight junction-mediated cell barrier. Positively regulates epithelial cell microtubule elongation and cell migration, possibly via facilitating localization of PRKCI/aPKC and PAR3D/PAR3 at the leading edge of migrating cells. Plays a role in the correct reorientation of the microtubule-organizing center during epithelial migration. May regulate the surface expression and/or function of ASIC3 in sensory neurons. May recruit ARHGEF18 to apical cell-cell boundaries. The polypeptide is InaD-like protein (Rattus norvegicus (Rat)).